Reading from the N-terminus, the 764-residue chain is 5-methyltetrahydropteroyltriglutamate--homocysteine methyltransferase (764 aa).

5-methyltetrahydropteroyltri-L-glutamate contacts are provided by residues 16-19 (RELK) and Lys115. L-homocysteine-binding positions include 435-437 (IGS) and Glu488. Residues 435–437 (IGS) and Glu488 each bind L-methionine. Residues 519-520 (RC) and Trp565 contribute to the 5-methyltetrahydropteroyltri-L-glutamate site. Asp603 contacts L-homocysteine. Asp603 contributes to the L-methionine binding site. Glu609 contributes to the 5-methyltetrahydropteroyltri-L-glutamate binding site. Residues His645, Cys647, and Glu669 each contribute to the Zn(2+) site. Residue His698 is the Proton donor of the active site. Cys730 serves as a coordination point for Zn(2+).

It belongs to the vitamin-B12 independent methionine synthase family. The cofactor is Zn(2+).

It catalyses the reaction 5-methyltetrahydropteroyltri-L-glutamate + L-homocysteine = tetrahydropteroyltri-L-glutamate + L-methionine. It participates in amino-acid biosynthesis; L-methionine biosynthesis via de novo pathway; L-methionine from L-homocysteine (MetE route): step 1/1. Its function is as follows. Catalyzes the transfer of a methyl group from 5-methyltetrahydrofolate to homocysteine resulting in methionine formation. The chain is 5-methyltetrahydropteroyltriglutamate--homocysteine methyltransferase from Burkholderia thailandensis (strain ATCC 700388 / DSM 13276 / CCUG 48851 / CIP 106301 / E264).